The sequence spans 79 residues: Small ribosomal subunit protein bS16 (79 aa).

The protein belongs to the bacterial ribosomal protein bS16 family.

The chain is Small ribosomal subunit protein bS16 from Marinobacter nauticus (strain ATCC 700491 / DSM 11845 / VT8) (Marinobacter aquaeolei).